The chain runs to 91 residues: Small ribosomal subunit protein uS19 (91 aa).

It belongs to the universal ribosomal protein uS19 family.

Protein S19 forms a complex with S13 that binds strongly to the 16S ribosomal RNA. The chain is Small ribosomal subunit protein uS19 from Methylibium petroleiphilum (strain ATCC BAA-1232 / LMG 22953 / PM1).